Reading from the N-terminus, the 523-residue chain is (R)-citramalate synthase (523 aa).

In terms of domain architecture, Pyruvate carboxyltransferase spans 6-272 (VEVLDTTLRD…KGNESLKKLK (267 aa)).

Belongs to the alpha-IPM synthase/homocitrate synthase family.

The catalysed reaction is pyruvate + acetyl-CoA + H2O = (3R)-citramalate + CoA + H(+). Its pathway is amino-acid biosynthesis; L-isoleucine biosynthesis; 2-oxobutanoate from pyruvate: step 1/3. Inhibited by isoleucine. Functionally, catalyzes the condensation of pyruvate and acetyl-coenzyme A to form (R)-citramalate. Makes part of a pathway for isoleucine biosynthesis, i.e. the citramalate-dependent pathway. Also displays a low alpha-isopropylmalate synthase activity, using 2-oxoisovalerate as substrate, but is unable to use 2-oxoglutarate. The chain is (R)-citramalate synthase from Sulfolobus acidocaldarius (strain ATCC 33909 / DSM 639 / JCM 8929 / NBRC 15157 / NCIMB 11770).